The primary structure comprises 658 residues: Threonine--tRNA ligase (658 aa).

Residues 1-61 enclose the TGS domain; the sequence is MIELVFPDGS…EKGGAFKILT (61 aa). A catalytic region spans residues 243–535; it reads DHRKLGRQMD…LIENYAGAFP (293 aa). Positions 335, 386, and 512 each coordinate Zn(2+).

The protein belongs to the class-II aminoacyl-tRNA synthetase family. Homodimer. It depends on Zn(2+) as a cofactor.

It localises to the cytoplasm. The enzyme catalyses tRNA(Thr) + L-threonine + ATP = L-threonyl-tRNA(Thr) + AMP + diphosphate + H(+). Functionally, catalyzes the attachment of threonine to tRNA(Thr) in a two-step reaction: L-threonine is first activated by ATP to form Thr-AMP and then transferred to the acceptor end of tRNA(Thr). Also edits incorrectly charged L-seryl-tRNA(Thr). This is Threonine--tRNA ligase from Phenylobacterium zucineum (strain HLK1).